A 4731-amino-acid polypeptide reads, in one-letter code: Dynein axonemal heavy chain 8 (4731 aa).

Positions 1-145 (MESEEGNAEP…SKFRRSMTGI (145 aa)) are disordered. Positions 9–55 (EPPPPSEEAPPPVVEEAPPPLPPEDTAPPPPEEQAPPPEGDAAPPPT) are enriched in pro residues. The span at 66-75 (EAPHPEDPKL) shows a compositional bias: basic and acidic residues. Acidic residues predominate over residues 94-106 (SDEEVTLPEDEES). Polar residues predominate over residues 122–133 (SVLSDGISQSSR). Positions 145 to 169 (IPNLQETLKEKQARFREARENRKMK) form a coiled coil. S917 is subject to Phosphoserine. The disordered stretch occupies residues 1177–1201 (FQNNSRGSDQPPASGKPLKKEERSF). Residues 1543 to 1567 (DVDIEKINAELQEFQNRCRKLPRAL) adopt a coiled-coil conformation. AAA regions lie at residues 2049 to 2271 (YQNE…VLRT), 2331 to 2550 (SAVD…KLSL), 2657 to 2910 (FYPT…IWQG), and 3021 to 3275 (QFNE…YRRR). ATP contacts are provided by residues 2087 to 2094 (GPAGTGKT) and 2369 to 2376 (GPSGSGKT). The segment at 3290 to 3587 (YKSIYTDKVK…MDLLNDADMC (298 aa)) is stalk. 3 coiled-coil regions span residues 3313–3405 (DKLM…ALNT), 3531–3583 (LKAN…LLND), and 3836–3871 (RVIL…DNLL). AAA stretches follow at residues 3673-3903 (LVDP…EVSE) and 4118-4332 (ARKY…FIQN).

The protein belongs to the dynein heavy chain family. Consists of at least two heavy chains and a number of intermediate and light chains. As to expression, isoform 1 and/or isoform 2 are expressed in spermatocytes and mature sperm (at protein level). Testis-specific. Accumulates exclusively in mid to late spermatocytes.

The protein localises to the cytoplasm. It localises to the cytoskeleton. The protein resides in the flagellum axoneme. In terms of biological role, force generating protein component of the outer dynein arms (ODAs) in the sperm flagellum. Produces force towards the minus ends of microtubules. Dynein has ATPase activity; the force-producing power stroke is thought to occur on release of ADP. Involved in sperm motility; implicated in sperm flagellar assembly. The protein is Dynein axonemal heavy chain 8 (Dnah8) of Mus musculus (Mouse).